Consider the following 739-residue polypeptide: Phosphoribosylformylglycinamidine synthase subunit PurL (739 aa).

H54 is a catalytic residue. The ATP site is built by Y57 and K96. E98 lines the Mg(2+) pocket. Residues 99–102 and R121 contribute to the substrate site; that span reads SHNH. The Proton acceptor role is filled by H100. Residue D122 participates in Mg(2+) binding. Position 245 (Q245) interacts with substrate. Mg(2+) is bound at residue D273. 317-319 is a binding site for substrate; the sequence is ESQ. ATP-binding residues include D500 and G537. N538 contacts Mg(2+). Substrate is bound at residue S540.

It belongs to the FGAMS family. As to quaternary structure, monomer. Part of the FGAM synthase complex composed of 1 PurL, 1 PurQ and 2 PurS subunits.

The protein resides in the cytoplasm. It catalyses the reaction N(2)-formyl-N(1)-(5-phospho-beta-D-ribosyl)glycinamide + L-glutamine + ATP + H2O = 2-formamido-N(1)-(5-O-phospho-beta-D-ribosyl)acetamidine + L-glutamate + ADP + phosphate + H(+). It functions in the pathway purine metabolism; IMP biosynthesis via de novo pathway; 5-amino-1-(5-phospho-D-ribosyl)imidazole from N(2)-formyl-N(1)-(5-phospho-D-ribosyl)glycinamide: step 1/2. In terms of biological role, part of the phosphoribosylformylglycinamidine synthase complex involved in the purines biosynthetic pathway. Catalyzes the ATP-dependent conversion of formylglycinamide ribonucleotide (FGAR) and glutamine to yield formylglycinamidine ribonucleotide (FGAM) and glutamate. The FGAM synthase complex is composed of three subunits. PurQ produces an ammonia molecule by converting glutamine to glutamate. PurL transfers the ammonia molecule to FGAR to form FGAM in an ATP-dependent manner. PurS interacts with PurQ and PurL and is thought to assist in the transfer of the ammonia molecule from PurQ to PurL. The protein is Phosphoribosylformylglycinamidine synthase subunit PurL of Bacillus cytotoxicus (strain DSM 22905 / CIP 110041 / 391-98 / NVH 391-98).